The chain runs to 265 residues: Small ribosomal subunit protein uS5 (265 aa).

Residues 1–15 (MADTQPAQEAPAADA) show a composition bias toward low complexity. The interval 1-44 (MADTQPAQEAPAADAPRAERNFGRGRGGRGGRGRGRGGPGEEKE) is disordered. The segment covering 26-35 (RGGRGGRGRG) has biased composition (basic residues). One can recognise an S5 DRBM domain in the interval 88-151 (LHDEMMKIYP…IAAKLNIVPV (64 aa)). The interval 245–265 (TEPSRDPTDEHGELLAEMTTA) is disordered. Positions 246 to 258 (EPSRDPTDEHGEL) are enriched in basic and acidic residues.

The protein belongs to the universal ribosomal protein uS5 family.

Functionally, component of the ribosome, a large ribonucleoprotein complex responsible for the synthesis of proteins in the cell. The small ribosomal subunit (SSU) binds messenger RNAs (mRNAs) and translates the encoded message by selecting cognate aminoacyl-transfer RNA (tRNA) molecules. The large subunit (LSU) contains the ribosomal catalytic site termed the peptidyl transferase center (PTC), which catalyzes the formation of peptide bonds, thereby polymerizing the amino acids delivered by tRNAs into a polypeptide chain. The nascent polypeptides leave the ribosome through a tunnel in the LSU and interact with protein factors that function in enzymatic processing, targeting, and the membrane insertion of nascent chains at the exit of the ribosomal tunnel. Plays a role in the assembly and function of the 40S ribosomal subunit. Mutations in this protein affects the control of translational fidelity. Involved in nucleolar processing of pre-18S ribosomal RNA and ribosome assembly. The protein is Small ribosomal subunit protein uS5 of Leishmania amazonensis.